The sequence spans 128 residues: Calcitonin gene-related peptide 1 (128 aa).

Residues 1–25 (MGFQKFSPFLALSILVLLQAGSLHA) form the signal peptide. A propeptide spanning residues 26–80 (APFRSALESSPADPATLSEDEARLLLAALVQDYVQMKASELEQEQEREGSRIIAQ) is cleaved from the precursor. A disulfide bridge connects residues C84 and C89. Phenylalanine amide is present on F119. The propeptide occupies 125–128 (DLQA).

Belongs to the calcitonin family. In terms of tissue distribution, expressed in spinal cord.

Its subcellular location is the secreted. In terms of biological role, CGRP1/CALCA is a peptide hormone that induces vasodilation mediated by the CALCRL-RAMP1 receptor complex. Dilates a variety of vessels including the coronary, cerebral and systemic vasculature. Its abundance in the CNS also points toward a neurotransmitter or neuromodulator role. It also elevates platelet cAMP. CGRP1 can also bind and activate CALCR-RAMP1 (AMYR1) receptor complex. The chain is Calcitonin gene-related peptide 1 from Homo sapiens (Human).